Here is a 576-residue protein sequence, read N- to C-terminus: MTDFPTHFKGPKLNPIKVNPNFFERNPKVARVLQITAVVLGIIALLSGIVLIIGTPLGAPISMILGGCLLASGGALFVGGTIATILQARNSYKKAVNQKKLSEPLMERPELKALDYSLDLKEVWDLHHSVVKHLKKLDLNLSETQREVLNQIKIDDEGPSLGECAAMISENYDACLKMLAYREELLKEQTQYQETRFNQNLTHRNKVLLSILSRITDNISKAGGVFSLKFSTLSSRMSRIHTTTTVILALSAVVSVMVVAALIPGGILALPILLAVAISAGVIVTGLSYLVRQILSNTKRNRQDFYKDFVKNVDIELLNQTVTLQRFLFEMLKGVLKEEEEVSLEGQDWYTQYITNAPIEKRLIEEIRVTYKEIDAQTKKMKTDLEFLENEVRSGRLSVASPSEDPSETPIFTQGKEFAKLRRQTSQNISTIYGPDNENIDPEFSLPWMPKKEEEIDHSLEPVTKLEPGSREELLLVEGVNPTLRELNMRIALLQQQLSSVRKWRHPRGEHYGNVIYSDTELDRIQMLEGAFYNHLREAQEEITQSLGDLVDIQNRILGIIVEGDSDSRTEEEPQE.

This sequence belongs to the chlamydial CPn_0065/CT_288/TC_0561 family.

This is an uncharacterized protein from Chlamydia pneumoniae (Chlamydophila pneumoniae).